The primary structure comprises 702 residues: MARKTPIERYRNIGISAHIDAGKTTTTERILFYTGVNHKIGEVHDGAATMDWMEQEQERGITITSAATTCFWSGMAKQFEPHHVNIIDTPGHVDFTIEVERSMRVLDGAVMVYCAVGGVQPQSETVWRQANKYKVPRIAFVNKMDRMGANFLRVVGQLKSRLGANPVPLQLAIGAEEKFTGIIDLVKMKAINWNEADQGVTFEYEEIPADMAELAAEWHQNLVESAAEASDELMDKYLGGEELTEEEIKKALRQRVLKSEIILVTCGSAFKNKGVQAMLDAVIEYLPAPTDVESINGILDDGKDTPAVRHSDDKEPFSALAFKIATDPFVGNLTFFRVYSGIVNSGDTVLNSVKSQRERLGRIVQMHANKREEIKEVHAGDIAAAIGLKDVTTGDTLCDPNNPIILERMEFPEPVISVAVEPKTKADQEKMGMALGRLAKEDPSFRVWTDEESGQTIIAGMGELHLDILVDRMRREFNVEANVGKPQVAYRETIRETVKDVEGKHAKQSGGRGQYGHVVIDMSPLPPGGVGYEFVNEIVGGSIPKEFIPAVDKGIQEQLKSGPLAGYPVVDVKVRLHYGSYHDVDSSELAFKLAGSIAFKEGFKRAKPVLLEPIMKVEVETPEDYMGDVMGDLNRRRGIIEGMEDTATGKTVRVKVPLSEMFGYATDLRSQTQGRASYSMEFLEYAEAPSNVAKAVIEARGK.

Positions 8–290 constitute a tr-type G domain; that stretch reads ERYRNIGISA…AVIEYLPAPT (283 aa). Residues 17 to 24, 88 to 92, and 142 to 145 each bind GTP; these read AHIDAGKT, DTPGH, and NKMD.

The protein belongs to the TRAFAC class translation factor GTPase superfamily. Classic translation factor GTPase family. EF-G/EF-2 subfamily.

It localises to the cytoplasm. Catalyzes the GTP-dependent ribosomal translocation step during translation elongation. During this step, the ribosome changes from the pre-translocational (PRE) to the post-translocational (POST) state as the newly formed A-site-bound peptidyl-tRNA and P-site-bound deacylated tRNA move to the P and E sites, respectively. Catalyzes the coordinated movement of the two tRNA molecules, the mRNA and conformational changes in the ribosome. This chain is Elongation factor G, found in Yersinia pseudotuberculosis serotype O:1b (strain IP 31758).